Here is a 156-residue protein sequence, read N- to C-terminus: ATP synthase subunit b (156 aa).

A helical transmembrane segment spans residues 7-27 (LIGQTIAFIVFVWFCMKFVWP).

This sequence belongs to the ATPase B chain family. F-type ATPases have 2 components, F(1) - the catalytic core - and F(0) - the membrane proton channel. F(1) has five subunits: alpha(3), beta(3), gamma(1), delta(1), epsilon(1). F(0) has three main subunits: a(1), b(2) and c(10-14). The alpha and beta chains form an alternating ring which encloses part of the gamma chain. F(1) is attached to F(0) by a central stalk formed by the gamma and epsilon chains, while a peripheral stalk is formed by the delta and b chains.

The protein localises to the cell inner membrane. Functionally, f(1)F(0) ATP synthase produces ATP from ADP in the presence of a proton or sodium gradient. F-type ATPases consist of two structural domains, F(1) containing the extramembraneous catalytic core and F(0) containing the membrane proton channel, linked together by a central stalk and a peripheral stalk. During catalysis, ATP synthesis in the catalytic domain of F(1) is coupled via a rotary mechanism of the central stalk subunits to proton translocation. In terms of biological role, component of the F(0) channel, it forms part of the peripheral stalk, linking F(1) to F(0). The polypeptide is ATP synthase subunit b (Idiomarina loihiensis (strain ATCC BAA-735 / DSM 15497 / L2-TR)).